A 440-amino-acid polypeptide reads, in one-letter code: Chromosome partition protein MukF (440 aa).

The leucine-zipper stretch occupies residues 208-236 (LSETSGTLRELQDTLEAAGDKLQANLLRI).

This sequence belongs to the MukF family. Interacts, and probably forms a ternary complex, with MukE and MukB via its C-terminal region. The complex formation is stimulated by calcium or magnesium. It is required for an interaction between MukE and MukB.

Its subcellular location is the cytoplasm. It localises to the nucleoid. Its function is as follows. Involved in chromosome condensation, segregation and cell cycle progression. May participate in facilitating chromosome segregation by condensation DNA from both sides of a centrally located replisome during cell division. Not required for mini-F plasmid partitioning. Probably acts via its interaction with MukB and MukE. Overexpression results in anucleate cells. It has a calcium binding activity. This chain is Chromosome partition protein MukF, found in Escherichia fergusonii (strain ATCC 35469 / DSM 13698 / CCUG 18766 / IAM 14443 / JCM 21226 / LMG 7866 / NBRC 102419 / NCTC 12128 / CDC 0568-73).